Reading from the N-terminus, the 442-residue chain is UDP-N-acetylmuramate--L-alanine ligase (442 aa).

An ATP-binding site is contributed by 109–115; the sequence is GAHGKTS.

It belongs to the MurCDEF family.

It is found in the cytoplasm. It catalyses the reaction UDP-N-acetyl-alpha-D-muramate + L-alanine + ATP = UDP-N-acetyl-alpha-D-muramoyl-L-alanine + ADP + phosphate + H(+). It functions in the pathway cell wall biogenesis; peptidoglycan biosynthesis. Cell wall formation. The polypeptide is UDP-N-acetylmuramate--L-alanine ligase (Streptococcus pyogenes serotype M18 (strain MGAS8232)).